The following is a 473-amino-acid chain: Ribulose bisphosphate carboxylase large chain (473 aa).

A propeptide spanning residues 1 to 2 is cleaved from the precursor; the sequence is MS. Proline 3 carries the post-translational modification N-acetylproline. At lysine 14 the chain carries N6,N6,N6-trimethyllysine. Positions 123 and 173 each coordinate substrate. Lysine 175 serves as the catalytic Proton acceptor. Substrate is bound at residue lysine 177. Mg(2+) is bound by residues lysine 201, aspartate 203, and glutamate 204. Lysine 201 carries the N6-carboxylysine modification. Histidine 294 serves as the catalytic Proton acceptor. Substrate-binding residues include arginine 295, histidine 327, and serine 379.

It belongs to the RuBisCO large chain family. Type I subfamily. Heterohexadecamer of 8 large chains and 8 small chains; disulfide-linked. The disulfide link is formed within the large subunit homodimers. Requires Mg(2+) as cofactor. Post-translationally, the disulfide bond which can form in the large chain dimeric partners within the hexadecamer appears to be associated with oxidative stress and protein turnover.

It is found in the plastid. Its subcellular location is the chloroplast. The catalysed reaction is 2 (2R)-3-phosphoglycerate + 2 H(+) = D-ribulose 1,5-bisphosphate + CO2 + H2O. The enzyme catalyses D-ribulose 1,5-bisphosphate + O2 = 2-phosphoglycolate + (2R)-3-phosphoglycerate + 2 H(+). Functionally, ruBisCO catalyzes two reactions: the carboxylation of D-ribulose 1,5-bisphosphate, the primary event in carbon dioxide fixation, as well as the oxidative fragmentation of the pentose substrate in the photorespiration process. Both reactions occur simultaneously and in competition at the same active site. This chain is Ribulose bisphosphate carboxylase large chain, found in Vigna unguiculata (Cowpea).